The chain runs to 94 residues: Co-chaperonin GroES (94 aa).

The protein belongs to the GroES chaperonin family. Heptamer of 7 subunits arranged in a ring. Interacts with the chaperonin GroEL.

It localises to the cytoplasm. In terms of biological role, together with the chaperonin GroEL, plays an essential role in assisting protein folding. The GroEL-GroES system forms a nano-cage that allows encapsulation of the non-native substrate proteins and provides a physical environment optimized to promote and accelerate protein folding. GroES binds to the apical surface of the GroEL ring, thereby capping the opening of the GroEL channel. This chain is Co-chaperonin GroES, found in Clostridium beijerinckii (strain ATCC 51743 / NCIMB 8052) (Clostridium acetobutylicum).